Consider the following 246-residue polypeptide: Protein lin-37 homolog (246 aa).

The residue at position 1 (Met-1) is an N-acetylmethionine. Glycyl lysine isopeptide (Lys-Gly) (interchain with G-Cter in SUMO2) cross-links involve residues Lys-5 and Lys-7. The segment covering 36-55 (DRERLDEEPGKTSLDTHNKD) has biased composition (basic and acidic residues). 2 disordered regions span residues 36 to 90 (DRER…GGPQ) and 127 to 209 (PTVR…LIYR). 2 positions are modified to phosphoserine: Ser-135 and Ser-138. Residues 163–172 (LPPPTAPGPP) show a composition bias toward pro residues. At Thr-167 the chain carries Phosphothreonine. Phosphoserine occurs at positions 182 and 202.

Component of the DREAM complex (also named LINC complex) at least composed of E2F4, E2F5, LIN9, LIN37, LIN52, LIN54, MYBL1, MYBL2, RBL1, RBL2, RBBP4, TFDP1 and TFDP2. The complex exists in quiescent cells where it represses cell cycle-dependent genes. It dissociates in S phase when LIN9, LIN37, LIN52 and LIN54 form a subcomplex that binds to MYBL2.

In Bos taurus (Bovine), this protein is Protein lin-37 homolog (LIN37).